The following is a 133-amino-acid chain: MSVEASILVLVGGFIGGVMRFFLSGYVGRRIGETFPWGTFVVNVSGAFVIGTAAGLGARLGGIFSTTIFHEFIMVGLLGGYTTVSSFCLQSVNLMLDGEQRQALFNIVASALLCVLAVAAGYGGIMWIMEWPG.

Transmembrane regions (helical) follow at residues 7 to 27 (ILVL…SGYV), 37 to 57 (WGTF…AGLG), and 60 to 80 (LGGI…LLGG). Residues Gly-79 and Thr-82 each coordinate Na(+). The helical transmembrane segment at 107–127 (IVASALLCVLAVAAGYGGIMW) threads the bilayer.

Belongs to the fluoride channel Fluc/FEX (TC 1.A.43) family.

It localises to the cell inner membrane. It catalyses the reaction fluoride(in) = fluoride(out). With respect to regulation, na(+) is not transported, but it plays an essential structural role and its presence is essential for fluoride channel function. Its function is as follows. Fluoride-specific ion channel. Important for reducing fluoride concentration in the cell, thus reducing its toxicity. This chain is Fluoride-specific ion channel FluC 4, found in Brucella abortus biovar 1 (strain 9-941).